The primary structure comprises 1507 residues: DNA-directed RNA polymerase subunit beta' (1507 aa).

Residues C71, C73, C86, and C89 each coordinate Zn(2+). Residues D470, D472, and D474 each coordinate Mg(2+). Zn(2+) is bound by residues C800, C874, C881, and C884.

The protein belongs to the RNA polymerase beta' chain family. The RNAP catalytic core consists of 2 alpha, 1 beta, 1 beta' and 1 omega subunit. When a sigma factor is associated with the core the holoenzyme is formed, which can initiate transcription. Mg(2+) serves as cofactor. The cofactor is Zn(2+).

The catalysed reaction is RNA(n) + a ribonucleoside 5'-triphosphate = RNA(n+1) + diphosphate. Functionally, DNA-dependent RNA polymerase catalyzes the transcription of DNA into RNA using the four ribonucleoside triphosphates as substrates. In Nitratiruptor sp. (strain SB155-2), this protein is DNA-directed RNA polymerase subunit beta'.